The chain runs to 225 residues: Insulin-induced gene 2 protein (225 aa).

At 1 to 28 the chain is on the cytoplasmic side; the sequence is MAEGETKSPGPKKCGPYISSVTSQSVNL. The helical transmembrane segment at 29–51 threads the bilayer; sequence MIRGVVLFFIGVFLALVLNLLQI. Over 52–70 the chain is Lumenal; that stretch reads QRNVTLFPPDVIASIFSSA. A helical transmembrane segment spans residues 71–88; it reads WWVPPCCGTASAVIGLLY. Residues 89-103 lie on the Cytoplasmic side of the membrane; sequence PCIDRHLGEPHKFKR. The chain crosses the membrane as a helical span at residues 104 to 126; sequence EWSSVMRCVAVFVGINHASAKVD. Over 127–129 the chain is Lumenal; it reads FDN. Residues 130-148 traverse the membrane as a helical segment; the sequence is NIQLSLTLAALSIGLWWTF. Over 149-153 the chain is Cytoplasmic; it reads DRSRS. Serine 151 carries the phosphoserine modification. Residues 154–175 traverse the membrane as a helical segment; it reads GFGLGVGIAFLATVVTQLLVYN. At 176–189 the chain is on the lumenal side; it reads GVYQYTSPDFLYVR. A helical transmembrane segment spans residues 190 to 207; that stretch reads SWLPCIFFAGGITMGNIG. At 208–225 the chain is on the cytoplasmic side; it reads RQLAMYECKVIAEKSHQE. The residue at position 215 (cysteine 215) is a Cysteine sulfenic acid (-SOH); alternate. Cysteine 215 is covalently cross-linked (Glycyl cysteine thioester (Cys-Gly) (interchain with G-Cter in ubiquitin); alternate). The KxHxx motif lies at 219–225; that stretch reads AEKSHQE.

Belongs to the INSIG family. Interacts with SCAP; interaction is direct and only takes place in the presence of sterols; it prevents interaction between SCAP and the coat protein complex II (COPII). Associates with the SCAP-SREBP complex (composed of SCAP and SREBF1/SREBP1 or SREBF2/SREBP2); association is mediated via its interaction with SCAP and only takes place in the presence of sterols. Interacts with RNF139. Interacts with RNF145. Phosphorylation at Ser-151 by PCK1 reduces binding to oxysterol, disrupting the interaction between INSIG2 and SCAP, thereby promoting nuclear translocation of SREBP proteins (SREBF1/SREBP1 or SREBF2/SREBP2) and subsequent transcription of downstream lipogenesis-related genes. In terms of processing, polyubiquitinated by AMFR/gp78 at Cys-215 in some tissues such as adipose tissues, undifferentiated myoblasts and liver, leading to its degradation. In differentiated myotubes, Cys-215 oxidation prevents ubiquitination at the same site, resulting in protein stabilization. Post-translationally, oxidized at Cys-215 in differentiated myotubes, preventing ubiquitination at the same site, and resulting in protein stabilization.

The protein resides in the endoplasmic reticulum membrane. In terms of biological role, oxysterol-binding protein that mediates feedback control of cholesterol synthesis by controlling both endoplasmic reticulum to Golgi transport of SCAP and degradation of HMGCR. Acts as a negative regulator of cholesterol biosynthesis by mediating the retention of the SCAP-SREBP complex in the endoplasmic reticulum, thereby blocking the processing of sterol regulatory element-binding proteins (SREBPs) SREBF1/SREBP1 and SREBF2/SREBP2. Binds oxysterol, including 22-hydroxycholesterol, 24-hydroxycholesterol, 25-hydroxycholesterol and 27-hydroxycholesterol, regulating interaction with SCAP and retention of the SCAP-SREBP complex in the endoplasmic reticulum. In presence of oxysterol, interacts with SCAP, retaining the SCAP-SREBP complex in the endoplasmic reticulum, thereby preventing SCAP from escorting SREBF1/SREBP1 and SREBF2/SREBP2 to the Golgi. Sterol deprivation or phosphorylation by PCK1 reduce oxysterol-binding, disrupting the interaction between INSIG2 and SCAP, thereby promoting Golgi transport of the SCAP-SREBP complex, followed by processing and nuclear translocation of SREBF1/SREBP1 and SREBF2/SREBP2. Also regulates cholesterol synthesis by regulating degradation of HMGCR: initiates the sterol-mediated ubiquitin-mediated endoplasmic reticulum-associated degradation (ERAD) of HMGCR via recruitment of the reductase to the ubiquitin ligase RNF139. The chain is Insulin-induced gene 2 protein from Pongo abelii (Sumatran orangutan).